A 315-amino-acid chain; its full sequence is Small ribosomal subunit protein uS2 (315 aa).

The tract at residues 241-315 (AQHGEERRPG…QPAPGSDANR (75 aa)) is disordered. The segment covering 243–288 (HGEERRPGEEDRDAASERGQKDRRDRRDRRGGGRDRERREPREDRA) has biased composition (basic and acidic residues).

This sequence belongs to the universal ribosomal protein uS2 family.

The polypeptide is Small ribosomal subunit protein uS2 (Anaeromyxobacter sp. (strain Fw109-5)).